Consider the following 269-residue polypeptide: Thiazole synthase (269 aa).

K112 serves as the catalytic Schiff-base intermediate with DXP. Residues G173, A199 to G200, and N221 to T222 each bind 1-deoxy-D-xylulose 5-phosphate.

The protein belongs to the ThiG family. Homotetramer. Forms heterodimers with either ThiH or ThiS.

It is found in the cytoplasm. The enzyme catalyses [ThiS sulfur-carrier protein]-C-terminal-Gly-aminoethanethioate + 2-iminoacetate + 1-deoxy-D-xylulose 5-phosphate = [ThiS sulfur-carrier protein]-C-terminal Gly-Gly + 2-[(2R,5Z)-2-carboxy-4-methylthiazol-5(2H)-ylidene]ethyl phosphate + 2 H2O + H(+). It functions in the pathway cofactor biosynthesis; thiamine diphosphate biosynthesis. Its function is as follows. Catalyzes the rearrangement of 1-deoxy-D-xylulose 5-phosphate (DXP) to produce the thiazole phosphate moiety of thiamine. Sulfur is provided by the thiocarboxylate moiety of the carrier protein ThiS. In vitro, sulfur can be provided by H(2)S. This is Thiazole synthase from Caulobacter vibrioides (strain ATCC 19089 / CIP 103742 / CB 15) (Caulobacter crescentus).